We begin with the raw amino-acid sequence, 758 residues long: 5-methyltetrahydropteroyltriglutamate--homocysteine methyltransferase (758 aa).

5-methyltetrahydropteroyltri-L-glutamate-binding positions include 17–20 and Lys-117; that span reads RELK. Residues 434–436 and Glu-487 each bind L-homocysteine; that span reads IGS. Residues 434 to 436 and Glu-487 contribute to the L-methionine site; that span reads IGS. 5-methyltetrahydropteroyltri-L-glutamate is bound by residues 518-519 and Trp-564; that span reads RC. Asp-602 contributes to the L-homocysteine binding site. Asp-602 is a binding site for L-methionine. A 5-methyltetrahydropteroyltri-L-glutamate-binding site is contributed by Glu-608. Zn(2+) is bound by residues His-644, Cys-646, and Glu-668. His-697 serves as the catalytic Proton donor. Cys-729 is a binding site for Zn(2+).

Belongs to the vitamin-B12 independent methionine synthase family. Zn(2+) serves as cofactor.

It carries out the reaction 5-methyltetrahydropteroyltri-L-glutamate + L-homocysteine = tetrahydropteroyltri-L-glutamate + L-methionine. Its pathway is amino-acid biosynthesis; L-methionine biosynthesis via de novo pathway; L-methionine from L-homocysteine (MetE route): step 1/1. In terms of biological role, catalyzes the transfer of a methyl group from 5-methyltetrahydrofolate to homocysteine resulting in methionine formation. This Sodalis glossinidius (strain morsitans) protein is 5-methyltetrahydropteroyltriglutamate--homocysteine methyltransferase.